The following is a 2187-amino-acid chain: Nascent polypeptide-associated complex subunit alpha, muscle-specific form (2187 aa).

3 disordered regions span residues 1–20 (MPGE…PQPQ), 32–73 (LKVA…STPF), and 172–196 (IPPL…KGTA). Over residues 9-20 (VPATEQELPQPQ) the composition is skewed to polar residues. The segment covering 178-192 (KTSTSQVPSQGTLNL) has biased composition (polar residues). Position 247 is an asymmetric dimethylarginine (arginine 247). Disordered stretches follow at residues 335–370 (DSGA…LSPK), 579–611 (NTVS…SPLV), 738–835 (PKGS…PKDT), 884–1847 (KETL…PVEK), and 1892–2053 (PEAV…KAMS). The span at 347-369 (SAVTNELCSPPGSSNVAGTSLSP) shows a compositional bias: polar residues. Threonine 590 is modified (phosphothreonine). Composition is skewed to polar residues over residues 599-609 (AKNTAPSTTSP), 818-835 (VTPT…PKDT), and 887-905 (LATS…TPKS). Serine 822 is modified (phosphoserine). Residues 941–951 (PHVPPTSPPKS) show a composition bias toward pro residues. The span at 976–998 (TPTYPKKSPKPAASKKTPATPSP) shows a compositional bias: low complexity. Residues 1106-1122 (TPQNATPNESLAASSQK) show a composition bias toward polar residues. A phosphoserine mark is found at serine 1174 and serine 1177. Low complexity predominate over residues 1174–1195 (SPLSPKKASKTAAPKEAPATPS). Threonine 1364 carries the phosphothreonine modification. 2 positions are modified to phosphoserine: serine 1368 and serine 1392. Threonine 1398 bears the Phosphothreonine mark. Phosphoserine occurs at positions 1400 and 1423. Polar residues predominate over residues 1429 to 1440 (VTPSSKKLSQTV). The span at 1489–1504 (SPSSPKKAPKTAAPPS) shows a compositional bias: low complexity. Phosphoserine is present on serine 1492. Positions 1609-1631 (PVTTSLAQTAPPSLQKAPSTTIP) are enriched in polar residues. Low complexity-rich tracts occupy residues 1636 to 1670 (AAPA…TAPK) and 1714 to 1727 (SSPP…KRAS). Positions 1762–1772 (ACSTGTTTPQA) are enriched in polar residues. Low complexity-rich tracts occupy residues 1806–1823 (KSPG…CPDP) and 1892–1914 (PEAV…LAPS). A PXLXP motif is present at residues 1950 to 1954 (PPLIP). Residues 1973 to 1983 (APKPAGTPAPA) show a composition bias toward pro residues. A compositionally biased stretch (acidic residues) spans 2001 to 2014 (SDSDESVPELEEQD). Serine 2015 bears the Phosphoserine; by ILK1 mark. Residues 2016-2029 (TQTATQQAQLAAAA) show a composition bias toward low complexity. Residues 2041-2052 (QSRSEKKARKAM) form a required for DNA-binding region. The 66-residue stretch at 2042 to 2107 (SRSEKKARKA…AKIEDLSQQA (66 aa)) folds into the NAC-A/B domain. Serine 2104 carries the phosphoserine modification. An N6-acetyllysine; alternate modification is found at lysine 2114. Lysine 2114 is covalently cross-linked (Glycyl lysine isopeptide (Lys-Gly) (interchain with G-Cter in SUMO2); alternate). Threonine 2131 is modified (phosphothreonine; by GSK3-beta). Threonine 2133 is modified (phosphothreonine). A phosphoserine mark is found at serine 2138, serine 2158, serine 2163, and serine 2175. In terms of domain architecture, UBA spans 2148–2185 (VEVKDIELVMSQANVSRAKAVRALKNNSNDIVNAIMEL).

This sequence belongs to the NAC-alpha family. As to quaternary structure, interacts (via PXLXP motif) with the muscle-restricted histone methyltransferase SMYD1 (via MYND-type zinc finger). Phosphorylation of Ser-2015 by ILK during cell adhesion may promote nuclear localization. Phosphorylation of Thr-2131 by GSK3B may promote proteasome mediated degradation. Specifically expressed in heart and skeletal muscle: it is present in differentiated myotubes but not in myoblasts.

It is found in the cytoplasm. It localises to the nucleus. In terms of biological role, cardiac- and muscle-specific transcription factor. May act to regulate the expression of genes involved in the development of myotubes. Plays a critical role in ventricular cardiomyocyte expansion and regulates postnatal skeletal muscle growth and regeneration. Involved in the organized assembly of thick and thin filaments of myofibril sarcomeres. In Mus musculus (Mouse), this protein is Nascent polypeptide-associated complex subunit alpha, muscle-specific form (Naca).